Reading from the N-terminus, the 249-residue chain is tRNA (guanine-N(1)-)-methyltransferase (249 aa).

S-adenosyl-L-methionine-binding positions include glycine 113 and 133–138 (IGDFVV).

It belongs to the RNA methyltransferase TrmD family. Homodimer.

The protein localises to the cytoplasm. The enzyme catalyses guanosine(37) in tRNA + S-adenosyl-L-methionine = N(1)-methylguanosine(37) in tRNA + S-adenosyl-L-homocysteine + H(+). Specifically methylates guanosine-37 in various tRNAs. This is tRNA (guanine-N(1)-)-methyltransferase from Neisseria meningitidis serogroup C (strain 053442).